The sequence spans 360 residues: Phospho-N-acetylmuramoyl-pentapeptide-transferase (360 aa).

Helical transmembrane passes span 25–45 (RTIYASLTALVISFVLGPWLI), 73–93 (TMGGVLIMSAVMFSTLLWADL), 94–114 (TNAYVWIALGVTFGFGLIGFV), 134–154 (FCLQVVVAGIAGTVLVYGLNG), 173–193 (PGYVLFAILVMVGASNAVNLT), 198–218 (GLAIVPVAIAAGTYMIFAYVA), 240–260 (VFCGALVGAGLGFLWYNAYPA), 262–282 (IFMGDVGSLPLGGALGVVAIL), 287–307 (LALVIVGGLFVMEAVSVILQV), and 337–357 (KVIVRFWIIAIMLALLSVSTL).

The protein belongs to the glycosyltransferase 4 family. MraY subfamily. Mg(2+) is required as a cofactor.

Its subcellular location is the cell inner membrane. The catalysed reaction is UDP-N-acetyl-alpha-D-muramoyl-L-alanyl-gamma-D-glutamyl-meso-2,6-diaminopimeloyl-D-alanyl-D-alanine + di-trans,octa-cis-undecaprenyl phosphate = di-trans,octa-cis-undecaprenyl diphospho-N-acetyl-alpha-D-muramoyl-L-alanyl-D-glutamyl-meso-2,6-diaminopimeloyl-D-alanyl-D-alanine + UMP. It participates in cell wall biogenesis; peptidoglycan biosynthesis. Its function is as follows. Catalyzes the initial step of the lipid cycle reactions in the biosynthesis of the cell wall peptidoglycan: transfers peptidoglycan precursor phospho-MurNAc-pentapeptide from UDP-MurNAc-pentapeptide onto the lipid carrier undecaprenyl phosphate, yielding undecaprenyl-pyrophosphoryl-MurNAc-pentapeptide, known as lipid I. This chain is Phospho-N-acetylmuramoyl-pentapeptide-transferase, found in Desulfatibacillum aliphaticivorans.